We begin with the raw amino-acid sequence, 476 residues long: Transcriptional regulator claA (476 aa).

A DNA-binding region (zn(2)-C6 fungal-type) is located at residues 25–52; it reads CDTCLKAKIKCSQAKPTCARCLQQGRQC. Residues 63–92 are disordered; sequence PSTKNLPLDQLQQPKGRTAGGTARRSLSRR. The segment covering 64-77 has biased composition (polar residues); it reads STKNLPLDQLQQPK.

Its subcellular location is the nucleus. Functionally, transcriptional regulator; part of the cla gene cluster that produces clavatol and ortho-quinone methide. The clavatol biosynthesis cluster cla and the terrestric acid cluster tra are both involved in the production of peniphenones and penilactones. The protein is Transcriptional regulator claA of Penicillium crustosum (Blue mold fungus).